The primary structure comprises 116 residues: Heme-degrading monooxygenase (116 aa).

In terms of domain architecture, ABM spans 2–92; the sequence is VIVTNTSKIT…EYILENKISF (91 aa). Residue N6 coordinates Fe cation. H76 serves as a coordination point for heme.

This sequence belongs to the antibiotic biosynthesis monooxygenase family. Heme-degrading monooxygenase IsdG subfamily. In terms of assembly, homodimer.

It is found in the cytoplasm. It catalyses the reaction heme b + 3 reduced [NADPH--hemoprotein reductase] + 3 O2 = biliverdin IXalpha + CO + Fe(2+) + 3 oxidized [NADPH--hemoprotein reductase] + 3 H2O + H(+). Allows bacterial pathogens to use the host heme as an iron source. Catalyzes the oxidative degradation of the heme macrocyclic porphyrin ring to the biliverdin in the presence of a suitable electron donor such as ascorbate or NADPH--cytochrome P450 reductase, with subsequent release of free iron. The polypeptide is Heme-degrading monooxygenase (Halalkalibacterium halodurans (strain ATCC BAA-125 / DSM 18197 / FERM 7344 / JCM 9153 / C-125) (Bacillus halodurans)).